A 296-amino-acid chain; its full sequence is Probable endonuclease 4 (296 aa).

9 residues coordinate Zn(2+): His-68, His-109, Glu-144, Asp-178, His-181, His-213, Asp-226, His-228, and Glu-258.

It belongs to the AP endonuclease 2 family. Zn(2+) serves as cofactor.

The catalysed reaction is Endonucleolytic cleavage to 5'-phosphooligonucleotide end-products.. Endonuclease IV plays a role in DNA repair. It cleaves phosphodiester bonds at apurinic or apyrimidinic (AP) sites, generating a 3'-hydroxyl group and a 5'-terminal sugar phosphate. In Staphylococcus aureus (strain NCTC 8325 / PS 47), this protein is Probable endonuclease 4.